Reading from the N-terminus, the 1003-residue chain is Methyl-CpG-binding domain protein 6 (1003 aa).

The MBD domain maps to 13–83 (AGGPAATPVP…KVFNFDPLAP (71 aa)). A required for interaction with ASXL1/2/3 region spans residues 59–70 (DGTCKCGLECPL). 6 disordered regions span residues 123-222 (CSHS…PPPA), 241-302 (VPSD…ATMH), 334-619 (AKAQ…SAPP), 631-659 (ALGP…GLGD), 684-736 (ASLD…PQLL), and 753-1003 (SSPG…KLAP). Composition is skewed to pro residues over residues 142-157 (PGPP…PPTT) and 168-196 (QDPP…PDPV). The span at 252–262 (HASSSPPSDSP) shows a compositional bias: low complexity. Residues 273 to 293 (PPLPPSNNPPGPPGPPGPATQ) show a composition bias toward pro residues. The span at 351–363 (AQAPSAAHASPRP) shows a compositional bias: low complexity. Residues 393 to 409 (APAPVPQPFPLPEPSQP) show a composition bias toward pro residues. Positions 410–428 (ILPSVLSLLGLPTPGPSHS) are enriched in low complexity. A compositionally biased stretch (pro residues) spans 441–458 (LPPPPALSSGSPPQPRHP). Low complexity-rich tracts occupy residues 462-500 (SLPG…PSDG) and 533-550 (GAGF…LSLG). Residues 571–590 (QPPPEPLLPPPGGPGPPSAP) are compositionally biased toward pro residues. The segment covering 591–604 (GEPEGPSLLVASLL) has biased composition (low complexity). Over residues 605 to 618 (SPPPSDLLPPPSAP) the composition is skewed to pro residues. The segment covering 636–650 (AGDGEGSAEGAGGPN) has biased composition (gly residues). Positions 708 to 719 (TSSVTTATTDPG) are enriched in polar residues. Residues 768–798 (LLSSQLGLQLLPGGGAPPALSEASSPLACLL) are compositionally biased toward low complexity. Residues 805-817 (PEQPDAPCLPPES) show a composition bias toward pro residues. Positions 818–837 (PASALEPEPARPPLSALAPP) are enriched in low complexity. Residues 947–958 (RKSRRGRRRKYN) show a composition bias toward basic residues. The segment covering 960 to 969 (ARNSSSSRQD) has biased composition (polar residues). Over residues 989–1003 (RPGRPAKNKRRKLAP) the composition is skewed to basic residues.

As to quaternary structure, core component of the polycomb repressive deubiquitinase (PR-DUB) complex, at least composed of BAP1, one of ASXL1, ASXL2 or (probably) ASXL3, and one of MBD5 or MBD6. Distinct combinations of ASXL and MBD proteins may preferentially bind specific histone modification marks. The PR-DUB core associates with a number of accessory proteins, including FOXK1, FOXK2, KDM1B, HCFC1 and OGT; KDM1B specifically associates with ASXL2 PR-DUB complexes. Interacts (via MBD domain) with ASXL1, ASXL2 and ASXL3 (via PHD domain); the interaction is probably direct, mediates association with other PR-DUB complex core components. In terms of tissue distribution, expressed at highest levels in adult testis.

Its subcellular location is the nucleus. The protein resides in the chromosome. Non-catalytic component of the polycomb repressive deubiquitinase (PR-DUB) complex, a complex that specifically mediates deubiquitination of histone H2A monoubiquitinated at 'Lys-120' (H2AK119ub1). Important for stability of PR-DUB components and stimulating its ubiquitinase activity. As part of the PR-DUB complex, associates with chromatin enriched in histone marks H3K4me1, H3K4me3, and H3K27Ac, but not in H3K27me3. MBD5 and MBD6 containing complexes associate with distinct chromatin regions enriched in genes involved in different pathways. Heterochromatin recruitment is not mediated by DNA methylation. The PR-DUB complex is an epigenetic regulator of gene expression, including genes involved in development, cell communication, signaling, cell proliferation and cell viability; may promote cancer cell growth. This Mus musculus (Mouse) protein is Methyl-CpG-binding domain protein 6 (Mbd6).